A 127-amino-acid chain; its full sequence is MNIPDNLRYTKDHEWLQLLDDGVTAVVGITDFAQSELGDIVFVETKPVGTKVAAHGAFGTVEAVKTVADLFAPVAGEIVEVNGALDDAAIVNSDPYNEGWIVKMKLDNAAEVESLLSPADYSALIGE.

Residues 24 to 105 (TAVVGITDFA…YNEGWIVKMK (82 aa)) enclose the Lipoyl-binding domain. An N6-lipoyllysine modification is found at Lys-65.

It belongs to the GcvH family. As to quaternary structure, the glycine cleavage system is composed of four proteins: P, T, L and H. Requires (R)-lipoate as cofactor.

Its function is as follows. The glycine cleavage system catalyzes the degradation of glycine. The H protein shuttles the methylamine group of glycine from the P protein to the T protein. The polypeptide is Glycine cleavage system H protein (Chlorobaculum parvum (strain DSM 263 / NCIMB 8327) (Chlorobium vibrioforme subsp. thiosulfatophilum)).